The chain runs to 312 residues: ADIPOR-like receptor IZH4 (312 aa).

Residues 1–38 are disordered; that stretch reads MVSLTTIEQSPVKCETTTEKESNDTRGTDSNENAETKE. Topologically, residues 1–64 are cytoplasmic; it reads MVSLTTIEQS…YKNKSSRNES (64 aa). The span at 16–38 shows a compositional bias: basic and acidic residues; it reads TTTEKESNDTRGTDSNENAETKE. Residues 65–85 form a helical membrane-spanning segment; the sequence is LVALIYLLGSMLSFCLLIFFT. The Lumenal segment spans residues 86 to 101; that stretch reads DFYLIPLFPTTTTMTD. Residues 102–122 form a helical membrane-spanning segment; the sequence is YIVFNFYLLNVFVFCMVHFIY. The Cytoplasmic segment spans residues 123–141; it reads HFVKNISLQQHLEHWQKFS. A helical transmembrane segment spans residues 142-162; the sequence is YLSNINLLISSQITILYYLFY. Topologically, residues 163–165 are lumenal; the sequence is DYV. Residues 166-186 form a helical membrane-spanning segment; sequence FFFKIFTLLMNFIGLVAYFFI. Residues 187-201 are Cytoplasmic-facing; it reads LTDKLISSKRFNKTV. Residues 202–222 form a helical membrane-spanning segment; the sequence is FFISVSVVCCSLPLLTAIITF. The Lumenal portion of the chain corresponds to 223 to 231; it reads DGLENLKER. Residues 232-252 traverse the membrane as a helical segment; it reads IKVNAITWELVALVAASIIYV. Residues 253 to 277 lie on the Cytoplasmic side of the membrane; the sequence is TRFPESLFRRNKKEEGWNHSEYLFH. The helical transmembrane segment at 278-298 threads the bilayer; the sequence is LLISGTAFYHFFILIQSYILM. The Lumenal portion of the chain corresponds to 299 to 312; sequence HSSLNQPELINFKS.

It belongs to the ADIPOR family.

It is found in the endoplasmic reticulum membrane. Its function is as follows. ADIPOR-like receptor involved in zinc metabolism either by altering membrane sterol content or by directly altering cellular zinc levels. This is ADIPOR-like receptor IZH4 (IZH4) from Saccharomyces cerevisiae (strain ATCC 204508 / S288c) (Baker's yeast).